A 541-amino-acid chain; its full sequence is Glycogen synthase (541 aa).

Lys-17 serves as a coordination point for ADP-alpha-D-glucose. Residues 497 to 541 (LARPASPPDTAPVGKPARRRRTTALSTTARAHPVARAAGREKIRA) form a disordered region.

It belongs to the glycosyltransferase 1 family. Bacterial/plant glycogen synthase subfamily.

The enzyme catalyses [(1-&gt;4)-alpha-D-glucosyl](n) + ADP-alpha-D-glucose = [(1-&gt;4)-alpha-D-glucosyl](n+1) + ADP + H(+). It functions in the pathway glycan biosynthesis; glycogen biosynthesis. Its function is as follows. Synthesizes alpha-1,4-glucan chains using ADP-glucose. The chain is Glycogen synthase from Ralstonia nicotianae (strain ATCC BAA-1114 / GMI1000) (Ralstonia solanacearum).